A 209-amino-acid polypeptide reads, in one-letter code: Cilia- and flagella-associated protein 418 (209 aa).

Residues 1-76 are required for interaction with FAM161A; that stretch reads MAKDLDELLD…LINEIFEEPD (76 aa). The disordered stretch occupies residues 24–58; sequence LDLGERPKGDGGGGSHSGDRNGAQEKETLRSTETF. Residues 40–58 show a composition bias toward basic and acidic residues; that stretch reads SGDRNGAQEKETLRSTETF.

Interacts (via N-terminus) with FAM161A (via central region); the interaction is direct. As to expression, expressed in multiple tissues, including the brain, kidney, lung, spleen, heart, trachea and testis. Expressed in the retina (at protein level).

The protein resides in the cytoplasm. It is found in the photoreceptor inner segment. Functionally, may be involved in photoreceptor outer segment disk morphogenesis. In Mus musculus (Mouse), this protein is Cilia- and flagella-associated protein 418.